The sequence spans 250 residues: DNA repair protein RecO (250 aa).

Belongs to the RecO family.

In terms of biological role, involved in DNA repair and RecF pathway recombination. The polypeptide is DNA repair protein RecO (Staphylococcus aureus (strain MW2)).